The primary structure comprises 37 residues: Large ribosomal subunit protein bL36 (37 aa).

Belongs to the bacterial ribosomal protein bL36 family.

The protein is Large ribosomal subunit protein bL36 of Paracidovorax citrulli (strain AAC00-1) (Acidovorax citrulli).